The sequence spans 381 residues: cAMP-dependent protein kinase type I-beta regulatory subunit (381 aa).

Positions 2-136 (ASPPACPSEE…ALAKAISKNV (135 aa)) are dimerization and phosphorylation. Phosphoserine is present on serine 3. A 3'-nitrotyrosine modification is found at tyrosine 21. The tract at residues 67–98 (ARQKSNSQSDSHDEEVSPTPPNPVVKARRRRG) is disordered. Serine 77 and serine 83 each carry phosphoserine. A Phosphothreonine modification is found at threonine 85. A Pseudophosphorylation motif motif is present at residues 96–100 (RRGGV). Omega-N-methylarginine is present on arginine 97. Residues 137–254 (LFAH…SKVS), glutamate 202, arginine 211, 255–381 (ILES…SLTV), glutamate 326, and arginine 335 each bind 3',5'-cyclic AMP.

This sequence belongs to the cAMP-dependent kinase regulatory chain family. As to quaternary structure, the inactive holoenzyme is composed of two regulatory chains and two catalytic chains. Activation by cAMP releases the two active catalytic monomers and the regulatory dimer. Interacts with PRKX; regulates this cAMP-dependent protein kinase. Interacts with C2orf88/smAKAP; this interaction may target PRKAR1B to the plasma membrane. Post-translationally, the pseudophosphorylation site binds to the substrate-binding region of the catalytic chain, resulting in the inhibition of its activity. In terms of tissue distribution, four types of regulatory chains are found: I-alpha, I-beta, II-alpha, and II-beta. Their expression varies among tissues and is in some cases constitutive and in others inducible.

Its subcellular location is the cell membrane. Regulatory subunit of the cAMP-dependent protein kinases involved in cAMP signaling in cells. The polypeptide is cAMP-dependent protein kinase type I-beta regulatory subunit (PRKAR1B) (Homo sapiens (Human)).